Here is a 37-residue protein sequence, read N- to C-terminus: Large ribosomal subunit protein bL36 (37 aa).

This sequence belongs to the bacterial ribosomal protein bL36 family.

This is Large ribosomal subunit protein bL36 from Symbiobacterium thermophilum (strain DSM 24528 / JCM 14929 / IAM 14863 / T).